We begin with the raw amino-acid sequence, 356 residues long: Trans-enoyl reductase pgmF (356 aa).

NADP(+) contacts are provided by residues 57-60, 175-178, 198-201, tyrosine 216, 261-262, and 342-343; these read VDFK, SGGC, STPN, VG, and AK.

Belongs to the zinc-containing alcohol dehydrogenase family.

Functionally, FAD-linked oxidoreductase; part of the gene cluster that mediates the biosynthesis of pleosporalin A, ascomycone A, as well as a third cryptic naphthoquinone derived pigment, all responsible for the coloration of conidia. The pathway begins with the biosynthesis of the cyclized heptaketide 3-acetonyl-1,6,8-trihydroxy-2-naphthaldehyde by the NR-PKS pgmA. The C-6 hydroxyl group is further methylated by the O-methyltransferase pgmB to yield fusarubinaldehyde which is in turn oxidized by the cytochrome P450 monooxygenase pgmC at C-9. The C-1 hydroxyl group is then methylated spontaneously. Although pgmE, pgmD and pgmH are essential for the production of pleosporalin A, it is not the case for the 2 other final products and it remains difficult to assign a specific function to each enzyme. PgmF and pgmG seem not to be involved in pigment biosynthesis although they were regulated by the cluster-specific transcription factor pgmR. The polypeptide is Trans-enoyl reductase pgmF (Aspergillus terreus).